We begin with the raw amino-acid sequence, 840 residues long: Putative pentatricopeptide repeat-containing protein At1g31840 (840 aa).

PPR repeat units follow at residues Lys-98 to Asn-128, Asp-145 to Ile-179, Pro-180 to Pro-214, Gly-216 to Val-250, Gly-251 to Pro-284, Asn-285 to Pro-319, Asp-320 to Leu-354, Asp-355 to Pro-389, Asn-390 to Pro-424, Ser-425 to Pro-459, Asp-460 to Leu-494, Asn-495 to Pro-529, Asp-530 to Pro-564, Asp-565 to Ala-599, Asp-600 to Pro-634, Asp-635 to Pro-669, Asn-670 to Pro-704, Asn-705 to Pro-739, Ser-740 to Pro-774, and Asp-775 to Pro-809.

This sequence belongs to the PPR family. P subfamily.

The protein is Putative pentatricopeptide repeat-containing protein At1g31840 of Arabidopsis thaliana (Mouse-ear cress).